The following is an 81-amino-acid chain: Cytotoxin 5 (81 aa).

A signal peptide spans 1-21 (MKTLLLTLVVVTIVCLDLGYT). Cystine bridges form between Cys24/Cys42, Cys35/Cys59, Cys63/Cys74, and Cys75/Cys80.

Belongs to the three-finger toxin family. Short-chain subfamily. Type IA cytotoxin sub-subfamily. Monomer in solution; Homodimer and oligomer in the presence of negatively charged lipids forming a pore with a size ranging between 20 and 30 Angstroms. In terms of tissue distribution, expressed by the venom gland.

Its subcellular location is the secreted. The protein localises to the target cell membrane. Shows cytolytic activity on many different cells by forming pore in lipid membranes. In vivo, increases heart rate or kills the animal by cardiac arrest. In addition, it binds to heparin with high affinity, interacts with Kv channel-interacting protein 1 (KCNIP1) in a calcium-independent manner, and binds to integrin alpha-V/beta-3 (ITGAV/ITGB3) with moderate affinity. This chain is Cytotoxin 5, found in Naja atra (Chinese cobra).